The sequence spans 125 residues: MRHYEIILLIHPDQSEQVPAMLERYKGMITAGGGKIHRVEDWGRRQLAYMINKLAKAHYLCVNIEADQAVMAELEHAFKFNDAVLRHLTVVKKKAETGASSMMKTVEREEARKASQAEFAAANER.

The segment at 96–125 is disordered; sequence ETGASSMMKTVEREEARKASQAEFAAANER. A compositionally biased stretch (basic and acidic residues) spans 105–115; the sequence is TVEREEARKAS.

This sequence belongs to the bacterial ribosomal protein bS6 family.

Its function is as follows. Binds together with bS18 to 16S ribosomal RNA. This Paracidovorax citrulli (strain AAC00-1) (Acidovorax citrulli) protein is Small ribosomal subunit protein bS6.